Consider the following 44-residue polypeptide: Phycoerythrin alpha-1 chain (44 aa).

The tract at residues 1-44 (AMDKSAKAPQITIFDHRGCSRAPKSETGGTATKDDQMMVKVSQV) is disordered. 5-hydroxylysine is present on K4. 2 residues coordinate 15,16-dihydrobiliverdin: C19 and R21. Residues 24–26 (KSE) are 15,16-dihydrobiliverdin chromophore. K40 serves as a coordination point for 15,16-dihydrobiliverdin.

It belongs to the phycoerythrin family. In terms of assembly, heterotetramer of 2 different alpha chains and 2 identical beta chains. The subunit composition could comprise of any combination of 2 out of 4 different alpha units with an invariant beta unit. In terms of processing, contains one covalently linked 15,16-dihydrobiliverdin chromophore.

The protein resides in the plastid. It localises to the chloroplast thylakoid membrane. Its function is as follows. Light-harvesting photosynthetic tetrapyrrole chromophore-protein from the phycobiliprotein complex. In Rhodomonas sp. (strain CS 24) (Chroomonas sp. (strain CS24)), this protein is Phycoerythrin alpha-1 chain (cpeA1).